The sequence spans 274 residues: ATP synthase subunit a (274 aa).

5 consecutive transmembrane segments (helical) span residues 43 to 63, 103 to 123, 149 to 169, 223 to 243, and 245 to 265; these read TLNIDSLFFSVVLGLAFLLVF, VIAPLALTVFVWVLLMNMMDL, DVSITLSMALGVFILIIFYSI, LIFILIAGLLPWWSQWMLSVP, and AIFHILIITLQAFIFMVLTIV.

It belongs to the ATPase A chain family. F-type ATPases have 2 components, CF(1) - the catalytic core - and CF(0) - the membrane proton channel. CF(1) has five subunits: alpha(3), beta(3), gamma(1), delta(1), epsilon(1). CF(0) has three main subunits: a(1), b(2) and c(9-12). The alpha and beta chains form an alternating ring which encloses part of the gamma chain. CF(1) is attached to CF(0) by a central stalk formed by the gamma and epsilon chains, while a peripheral stalk is formed by the delta and b chains.

It is found in the cell inner membrane. In terms of biological role, key component of the proton channel; it plays a direct role in the translocation of protons across the membrane. The protein is ATP synthase subunit a of Yersinia pestis bv. Antiqua (strain Angola).